A 147-amino-acid chain; its full sequence is Hemoglobin subunit beta (147 aa).

The Globin domain maps to 2-147 (EWTDAERSAI…VVSALCRQYH (146 aa)). The heme b site is built by H63 and H92.

This sequence belongs to the globin family. As to quaternary structure, heterotetramer of two alpha chains and two beta chains. Red blood cells.

Involved in oxygen transport from gills to the various peripheral tissues. The polypeptide is Hemoglobin subunit beta (hbb) (Carassius auratus (Goldfish)).